The primary structure comprises 108 residues: E3 ubiquitin-protein ligase Midline-1 (108 aa).

One can recognise a B30.2/SPRY domain in the interval 1–100; that stretch reads KSAPKHEWIG…IITGLPIPDH (100 aa).

The protein belongs to the TRIM/RBCC family. In terms of assembly, homodimer or heterodimer with MID2. Interacts with IGBP1.

Its subcellular location is the cytoplasm. The protein resides in the cytoskeleton. The catalysed reaction is S-ubiquitinyl-[E2 ubiquitin-conjugating enzyme]-L-cysteine + [acceptor protein]-L-lysine = [E2 ubiquitin-conjugating enzyme]-L-cysteine + N(6)-ubiquitinyl-[acceptor protein]-L-lysine.. Has E3 ubiquitin ligase activity towards IGBP1, promoting its monoubiquitination, which results in deprotection of the catalytic subunit of protein phosphatase PP2A, and its subsequent degradation by polyubiquitination. This chain is E3 ubiquitin-protein ligase Midline-1 (Mid1), found in Mus caroli (Ryukyu mouse).